Reading from the N-terminus, the 247-residue chain is Carboxy-S-adenosyl-L-methionine synthase (247 aa).

Residues tyrosine 40, 65–67, 90–91, 122–123, asparagine 137, and arginine 204 each bind S-adenosyl-L-methionine; these read GAS, DN, and DI.

The protein belongs to the class I-like SAM-binding methyltransferase superfamily. Cx-SAM synthase family. Homodimer.

It catalyses the reaction prephenate + S-adenosyl-L-methionine = carboxy-S-adenosyl-L-methionine + 3-phenylpyruvate + H2O. Its function is as follows. Catalyzes the conversion of S-adenosyl-L-methionine (SAM) to carboxy-S-adenosyl-L-methionine (Cx-SAM). This Ectopseudomonas mendocina (strain ymp) (Pseudomonas mendocina) protein is Carboxy-S-adenosyl-L-methionine synthase.